The chain runs to 251 residues: Imidazole glycerol phosphate synthase subunit HisF (251 aa).

Active-site residues include aspartate 11 and aspartate 130.

The protein belongs to the HisA/HisF family. In terms of assembly, heterodimer of HisH and HisF.

It localises to the cytoplasm. It catalyses the reaction 5-[(5-phospho-1-deoxy-D-ribulos-1-ylimino)methylamino]-1-(5-phospho-beta-D-ribosyl)imidazole-4-carboxamide + L-glutamine = D-erythro-1-(imidazol-4-yl)glycerol 3-phosphate + 5-amino-1-(5-phospho-beta-D-ribosyl)imidazole-4-carboxamide + L-glutamate + H(+). The protein operates within amino-acid biosynthesis; L-histidine biosynthesis; L-histidine from 5-phospho-alpha-D-ribose 1-diphosphate: step 5/9. IGPS catalyzes the conversion of PRFAR and glutamine to IGP, AICAR and glutamate. The HisF subunit catalyzes the cyclization activity that produces IGP and AICAR from PRFAR using the ammonia provided by the HisH subunit. The sequence is that of Imidazole glycerol phosphate synthase subunit HisF from Chlorobium luteolum (strain DSM 273 / BCRC 81028 / 2530) (Pelodictyon luteolum).